A 218-amino-acid chain; its full sequence is Urease accessory protein UreG (218 aa).

GTP is bound at residue Gly22–Thr29.

It belongs to the SIMIBI class G3E GTPase family. UreG subfamily. In terms of assembly, homodimer. UreD, UreF and UreG form a complex that acts as a GTP-hydrolysis-dependent molecular chaperone, activating the urease apoprotein by helping to assemble the nickel containing metallocenter of UreC. The UreE protein probably delivers the nickel.

Its subcellular location is the cytoplasm. Its function is as follows. Facilitates the functional incorporation of the urease nickel metallocenter. This process requires GTP hydrolysis, probably effectuated by UreG. In Polaromonas naphthalenivorans (strain CJ2), this protein is Urease accessory protein UreG.